The sequence spans 514 residues: Glutamate--cysteine ligase (514 aa).

This sequence belongs to the glutamate--cysteine ligase type 1 family. Type 1 subfamily.

It catalyses the reaction L-cysteine + L-glutamate + ATP = gamma-L-glutamyl-L-cysteine + ADP + phosphate + H(+). The protein operates within sulfur metabolism; glutathione biosynthesis; glutathione from L-cysteine and L-glutamate: step 1/2. This chain is Glutamate--cysteine ligase, found in Enterobacter sp. (strain 638).